Reading from the N-terminus, the 1060-residue chain is DNA-directed RNA polymerase subunit beta (1060 aa).

This sequence belongs to the RNA polymerase beta chain family. As to quaternary structure, in plastids the minimal PEP RNA polymerase catalytic core is composed of four subunits: alpha, beta, beta', and beta''. When a (nuclear-encoded) sigma factor is associated with the core the holoenzyme is formed, which can initiate transcription.

It is found in the plastid. It localises to the chloroplast. The enzyme catalyses RNA(n) + a ribonucleoside 5'-triphosphate = RNA(n+1) + diphosphate. In terms of biological role, DNA-dependent RNA polymerase catalyzes the transcription of DNA into RNA using the four ribonucleoside triphosphates as substrates. In Helianthus annuus (Common sunflower), this protein is DNA-directed RNA polymerase subunit beta.